We begin with the raw amino-acid sequence, 220 residues long: Small ribosomal subunit protein uS3c (220 aa).

In terms of domain architecture, KH type-2 spans 43–120 (IQHYVEKNTR…RLNIAIIRVA (78 aa)).

Belongs to the universal ribosomal protein uS3 family. Part of the 30S ribosomal subunit.

It localises to the plastid. Its subcellular location is the chloroplast. The chain is Small ribosomal subunit protein uS3c (rps3) from Piper cenocladum (Ant piper).